The primary structure comprises 320 residues: tRNA N6-adenosine threonylcarbamoyltransferase (320 aa).

Fe cation contacts are provided by His-114 and His-118. Substrate contacts are provided by residues 136–140 (VVSGG), Asp-169, Gly-182, Asp-186, and Asn-273. Residue Asp-297 participates in Fe cation binding.

This sequence belongs to the KAE1 / TsaD family. It depends on Fe(2+) as a cofactor.

Its subcellular location is the cytoplasm. It carries out the reaction L-threonylcarbamoyladenylate + adenosine(37) in tRNA = N(6)-L-threonylcarbamoyladenosine(37) in tRNA + AMP + H(+). In terms of biological role, required for the formation of a threonylcarbamoyl group on adenosine at position 37 (t(6)A37) in tRNAs that read codons beginning with adenine. Is involved in the transfer of the threonylcarbamoyl moiety of threonylcarbamoyl-AMP (TC-AMP) to the N6 group of A37, together with TsaE and TsaB. TsaD likely plays a direct catalytic role in this reaction. In Ureaplasma parvum serovar 3 (strain ATCC 27815 / 27 / NCTC 11736), this protein is tRNA N6-adenosine threonylcarbamoyltransferase.